Consider the following 536-residue polypeptide: Lysosomal acid glucosylceramidase (536 aa).

Positions 1 to 39 (MEFSSPSREECPKPSGRVNIMAGSLTGLLLLQAVSWASG) are cleaved as a signal peptide. Disulfide bonds link Cys43/Cys55 and Cys57/Cys62. N-linked (GlcNAc...) asparagine glycans are attached at residues Asn58, Asn98, and Asn185. The active-site Proton donor is the Glu274. An N-linked (GlcNAc...) asparagine glycan is attached at Asn309. Glu379 serves as the catalytic Nucleophile. Asn501 is a glycosylation site (N-linked (GlcNAc...) asparagine).

This sequence belongs to the glycosyl hydrolase 30 family. In terms of assembly, interacts with saposin-C. Interacts with SCARB2. Interacts with TCP1. Interacts with GRN; this interaction prevents aggregation of GBA1-SCARB2 complex via interaction with HSPA1A upon stress.

The protein localises to the lysosome membrane. It carries out the reaction a beta-D-glucosyl-(1&lt;-&gt;1')-N-acylsphing-4-enine + H2O = an N-acylsphing-4-enine + D-glucose. The catalysed reaction is a beta-D-galactosyl-(1&lt;-&gt;1')-N-acylsphing-4-enine + H2O = an N-acylsphing-4-enine + D-galactose. It catalyses the reaction cholesteryl 3-beta-D-glucoside + H2O = cholesterol + D-glucose. The enzyme catalyses a beta-D-glucosyl-(1&lt;-&gt;1')-N-acylsphing-4-enine + cholesterol = cholesteryl 3-beta-D-glucoside + an N-acylsphing-4-enine. It carries out the reaction beta-D-glucosyl-N-(9Z-octadecenoyl)-sphing-4E-enine + cholesterol = N-(9Z-octadecenoyl)-sphing-4-enine + cholesteryl 3-beta-D-glucoside. The catalysed reaction is beta-D-glucosyl-N-octanoylsphing-4E-enine + cholesterol = N-octanoylsphing-4-enine + cholesteryl 3-beta-D-glucoside. It catalyses the reaction beta-D-glucosyl-N-dodecanoylsphing-4-enine + cholesterol = N-dodecanoylsphing-4-enine + cholesteryl 3-beta-D-glucoside. The enzyme catalyses beta-D-glucosyl-(1&lt;-&gt;1)-N-octadecanoylsphing-4-enine + cholesterol = N-octadecanoylsphing-4-enine + cholesteryl 3-beta-D-glucoside. It carries out the reaction beta-D-glucosyl-(1&lt;-&gt;1')-N-(15Z-tetracosenoyl)-sphing-4-enine + cholesterol = N-(15Z-tetracosenoyl)-sphing-4-enine + cholesteryl 3-beta-D-glucoside. The catalysed reaction is a beta-D-galactosyl-(1&lt;-&gt;1')-N-acylsphing-4-enine + cholesterol = cholesteryl 3-beta-D-galactoside + an N-acylsphing-4-enine. It catalyses the reaction 1-(beta-D-galactosyl)-N-dodecanoylsphing-4-enine + cholesterol = cholesteryl 3-beta-D-galactoside + N-dodecanoylsphing-4-enine. The enzyme catalyses a beta-D-xylosyl-(1&lt;-&gt;1')-N-acylsphing-4-enine + cholesterol = cholesteryl 3-beta-D-xyloside + an N-acylsphing-4-enine. It carries out the reaction beta-D-xylosyl-(1&lt;-&gt;1')-N-(9Z-octadecenoyl)-sphing-4-enine + cholesterol = cholesteryl 3-beta-D-xyloside + N-(9Z-octadecenoyl)-sphing-4-enine. The protein operates within steroid metabolism; cholesterol metabolism. It participates in sphingolipid metabolism. Its function is as follows. Glucosylceramidase that catalyzes, within the lysosomal compartment, the hydrolysis of glucosylceramides/GlcCers (such as beta-D-glucosyl-(1&lt;-&gt;1')-N-acylsphing-4-enine) into free ceramides (such as N-acylsphing-4-enine) and glucose. Plays a central role in the degradation of complex lipids and the turnover of cellular membranes. Through the production of ceramides, participates in the PKC-activated salvage pathway of ceramide formation. Catalyzes the glucosylation of cholesterol, through a transglucosylation reaction where glucose is transferred from GlcCer to cholesterol. GlcCer containing mono-unsaturated fatty acids (such as beta-D-glucosyl-N-(9Z-octadecenoyl)-sphing-4-enine) are preferred as glucose donors for cholesterol glucosylation when compared with GlcCer containing same chain length of saturated fatty acids (such as beta-D-glucosyl-N-octadecanoyl-sphing-4-enine). Under specific conditions, may alternatively catalyze the reverse reaction, transferring glucose from cholesteryl 3-beta-D-glucoside to ceramide. Can also hydrolyze cholesteryl 3-beta-D-glucoside producing glucose and cholesterol. Catalyzes the hydrolysis of galactosylceramides/GalCers (such as beta-D-galactosyl-(1&lt;-&gt;1')-N-acylsphing-4-enine), as well as the transfer of galactose between GalCers and cholesterol in vitro, but with lower activity than with GlcCers. Contrary to GlcCer and GalCer, xylosylceramide/XylCer (such as beta-D-xyosyl-(1&lt;-&gt;1')-N-acylsphing-4-enine) is not a good substrate for hydrolysis, however it is a good xylose donor for transxylosylation activity to form cholesteryl 3-beta-D-xyloside. In Pongo abelii (Sumatran orangutan), this protein is Lysosomal acid glucosylceramidase (GBA1).